We begin with the raw amino-acid sequence, 170 residues long: Large ribosomal subunit protein uL10 (170 aa).

This sequence belongs to the universal ribosomal protein uL10 family. Part of the ribosomal stalk of the 50S ribosomal subunit. The N-terminus interacts with L11 and the large rRNA to form the base of the stalk. The C-terminus forms an elongated spine to which L12 dimers bind in a sequential fashion forming a multimeric L10(L12)X complex.

In terms of biological role, forms part of the ribosomal stalk, playing a central role in the interaction of the ribosome with GTP-bound translation factors. The sequence is that of Large ribosomal subunit protein uL10 from Fusobacterium nucleatum subsp. nucleatum (strain ATCC 25586 / DSM 15643 / BCRC 10681 / CIP 101130 / JCM 8532 / KCTC 2640 / LMG 13131 / VPI 4355).